Reading from the N-terminus, the 400-residue chain is Na(+)/H(+) antiporter NhaA (400 aa).

The next 11 helical transmembrane spans lie at 10-30 (FNLEASGGIVLALAAIAAMII), 60-80 (AHHWINDGLMAVFFFLVGLEL), 95-115 (IILPAGAALGGMIMPAIVYLF), 126-146 (GWAIPAATDIAFALGILSLLG), 155-175 (VFLVSIAIFDDIGAIIIIALF), 178-198 (NDLSLGSLAIAGLCLPFLYLL), 218-238 (VAVLKSGIHATLAGVVLALFI), 265-285 (GILPLFAFANAGISLKGAGFG), 295-315 (IAAGLFIGKQVGVMLMCWLIF), 334-354 (AALLCGVGFTMSLFIGGLAFA), and 364-384 (LGIIMGSIVSGIAGYMMLKAT).

The protein belongs to the NhaA Na(+)/H(+) (TC 2.A.33) antiporter family.

It localises to the cell inner membrane. The enzyme catalyses Na(+)(in) + 2 H(+)(out) = Na(+)(out) + 2 H(+)(in). Its function is as follows. Na(+)/H(+) antiporter that extrudes sodium in exchange for external protons. This chain is Na(+)/H(+) antiporter NhaA, found in Psychrobacter cryohalolentis (strain ATCC BAA-1226 / DSM 17306 / VKM B-2378 / K5).